The chain runs to 650 residues: AP-1-like transcription factor YAP1 (650 aa).

The interval 1–89 (MSVSTAKRSL…AFRERKERKM (89 aa)) is disordered. Phosphoserine occurs at positions 9, 14, and 17. Composition is skewed to basic and acidic residues over residues 22-50 (EGSK…EQPK), 58-68 (KKQDLDPETKQ), and 80-89 (AFRERKERKM). 2 short sequence motifs (bipartite nuclear localization signal) span residues 35-42 (HRRTGTRD) and 68-75 (QKRTAQNR). The bZIP domain occupies 64–127 (PETKQKRTAQ…ITLVNELKKY (64 aa)). The segment at 67–90 (KQKRTAQNRAAQRAFRERKERKMK) is basic motif. The leucine-zipper stretch occupies residues 92–120 (LEKKVQSLESIQQQNEVEATFLRDQLITL). Disordered regions lie at residues 149 to 169 (HFSK…PNDD) and 183 to 251 (QYPL…PNSS). Polar residues predominate over residues 150-162 (FSKNNVNHSNSEP). Threonine 165 is subject to Phosphothreonine. Polar residues predominate over residues 195 to 209 (SKNVGKQLPSPNDPS). Phosphoserine is present on serine 204. Positions 220-378 (QKKLSDATDS…YENSFSGFGR (159 aa)) are transcription activation 1. Positions 226-246 (ATDSSSATLDSLSNSNDVLNN) are enriched in low complexity. The interval 303–315 (CSKMNQVCGTRQC) is n-CRD. 5 cysteine pairs are disulfide-bonded: cysteine 303/cysteine 598, cysteine 310/cysteine 629, cysteine 598/cysteine 620, cysteine 598/cysteine 629, and cysteine 620/cysteine 629. Residue serine 372 is modified to Phosphoserine. Residues 392-414 (DNSTGSTDSTGSTGNKNKKNNNN) are compositionally biased toward low complexity. Disordered stretches follow at residues 392 to 419 (DNST…DDVL), 510 to 532 (LFGE…DDES), and 551 to 591 (LQSV…VPSK). The transcription activation 2 stretch occupies residues 430 to 537 (NQVTNFFSPG…SDDESSLIKN (108 aa)). Position 528 is a phosphoserine (serine 528). A compositionally biased stretch (polar residues) spans 551–570 (LQSVPGNESEISQKNGSSLQ). A compositionally biased stretch (low complexity) spans 571–580 (NADKINNGND). The tract at residues 598–629 (CSEIWDRITTHPKYSDIDVDGLCSELMAKAKC) is c-CRD. A Nuclear export signal motif is present at residues 614–621 (IDVDGLCS).

Belongs to the bZIP family. YAP subfamily. In terms of assembly, interacts independent of oxidation state in the cytoplasm with the karyopherin PSE1/KAP121 (and less strongly with KAP123). The reduced form of YAP1 interacts in the nucleus with the nuclear export protein CRM1, and in the cytoplasm with YBP1 and the peroxiredoxin HYR1/GPX3/ORP1. Interacts with RBG1. Depending on the oxidative stress inducing agent, YAP1 can undergo two distinct conformational changes, both involving disulfide bond formation, and both masking the nuclear export signal, thus abolishing nuclear export by CRM1/exportin 1. The disulfide stress-inducing agent diamide leads to the formation of one of three possible disulfide bonds in the c-CRD. Peroxide stress induces the formation of the HYR1/GPX3- and YBP1-dependent interdomain disulfide bond between Cys-303 and Cys-598 (causing nuclear localization of YAP1), and the possibly stabilizing bond between Cys-310 and Cys-629 (required for full activity of YAP1).

The protein localises to the nucleus. It is found in the cytoplasm. Transcription activator involved in oxidative stress response and redox homeostasis. Regulates the transcription of genes encoding antioxidant enzymes and components of the cellular thiol-reducing pathways, including the thioredoxin system (TRX2, TRR1), the glutaredoxin system (GSH1, GLR1), superoxide dismutase (SOD1, SOD2), glutathione peroxidase (GPX2), and thiol-specific peroxidases (TSA1, AHP1). The induction of some of these genes requires the cooperative action of both, YAP1 and SKN7. Preferentially binds to promoters with the core binding site 5'-TTA[CG]TAA-3'. Activity of the transcription factor is controlled through oxidation of specific cysteine residues resulting in the alteration of its subcellular location. Oxidative stress (as well as carbon stress, but not increased temperature, acidic pH, or ionic stress) induces nuclear accumulation and as a result YAP1 transcriptional activity. Activation by hydrogen peroxide or thiol-reactive chemicals elicit distinct adaptive gene responses. Nuclear export is restored when disulfide bonds are reduced by thioredoxin (TRX2), whose expression is controlled by YAP1, providing a mechanism for negative autoregulation. When overexpressed, YAP1 confers pleiotropic drug-resistance and increases cellular tolerance to cadmium, iron chelators and zinc. The sequence is that of AP-1-like transcription factor YAP1 from Saccharomyces cerevisiae (strain ATCC 204508 / S288c) (Baker's yeast).